A 337-amino-acid polypeptide reads, in one-letter code: Dihydroorotate dehydrogenase (quinone) (337 aa).

Residues 58-62 and threonine 82 contribute to the FMN site; that span reads AGLDK. Lysine 62 lines the substrate pocket. Position 107-111 (107-111) interacts with substrate; sequence NCMGF. FMN is bound by residues asparagine 137 and asparagine 170. Asparagine 170 serves as a coordination point for substrate. The active-site Nucleophile is the serine 173. Asparagine 175 is a binding site for substrate. 2 residues coordinate FMN: lysine 215 and threonine 243. 244 to 245 is a substrate binding site; sequence NT. Residues glycine 266, glycine 294, and 315 to 316 contribute to the FMN site; that span reads YS.

Belongs to the dihydroorotate dehydrogenase family. Type 2 subfamily. As to quaternary structure, monomer. FMN is required as a cofactor.

The protein localises to the cell membrane. It carries out the reaction (S)-dihydroorotate + a quinone = orotate + a quinol. It functions in the pathway pyrimidine metabolism; UMP biosynthesis via de novo pathway; orotate from (S)-dihydroorotate (quinone route): step 1/1. Its function is as follows. Catalyzes the conversion of dihydroorotate to orotate with quinone as electron acceptor. This is Dihydroorotate dehydrogenase (quinone) from Dichelobacter nodosus (strain VCS1703A).